The primary structure comprises 150 residues: Urease accessory protein UreE (150 aa).

It belongs to the UreE family.

The protein localises to the cytoplasm. In terms of biological role, involved in urease metallocenter assembly. Binds nickel. Probably functions as a nickel donor during metallocenter assembly. In Streptococcus salivarius (strain 57.I), this protein is Urease accessory protein UreE.